Here is a 231-residue protein sequence, read N- to C-terminus: 7-cyano-7-deazaguanine synthase (231 aa).

An ATP-binding site is contributed by 8–18 (FSGGQDSTTCL). Zn(2+) contacts are provided by cysteine 188, cysteine 197, cysteine 200, and cysteine 203.

It belongs to the QueC family. Requires Zn(2+) as cofactor.

The catalysed reaction is 7-carboxy-7-deazaguanine + NH4(+) + ATP = 7-cyano-7-deazaguanine + ADP + phosphate + H2O + H(+). It functions in the pathway purine metabolism; 7-cyano-7-deazaguanine biosynthesis. Catalyzes the ATP-dependent conversion of 7-carboxy-7-deazaguanine (CDG) to 7-cyano-7-deazaguanine (preQ(0)). The sequence is that of 7-cyano-7-deazaguanine synthase from Escherichia coli (strain SMS-3-5 / SECEC).